Here is an 816-residue protein sequence, read N- to C-terminus: Mechanosensitive cation channel TMEM63B (816 aa).

Residues 1 to 46 (MLPYVIATLGSAGSTCKASTCSNSTKDYCYSARIRSTVLQGLPFGG) are Extracellular-facing. Residues 47–71 (VPTVLALDFMCFLALLFVFSILRKV) traverse the membrane as a helical segment. Residues Cys57 and Cys119 are each lipidated (S-palmitoyl cysteine). Residues 72 to 138 (AWDYGRLALV…KDDEIRDKCG (67 aa)) lie on the Cytoplasmic side of the membrane. The chain crosses the membrane as a helical span at residues 139–171 (GDAVHYLSFQRHIIGLLVAVGVLSVGIVLPVNF). Residues 172–195 (SGDLLENNAYSFGRTTIANLNSGN) are Extracellular-facing. Residues 196–220 (NLLWLHTSFAFLYLLLTVYSMRRHT) form a helical membrane-spanning segment. Over 221–420 (SKMRYKEDDL…IYWEHLSIRG (200 aa)) the chain is Cytoplasmic. Positions 224-419 (RYKEDDLVKR…NIYWEHLSIR (196 aa)) are intracellular linker IL2; confers mechanosensitivity. S-palmitoyl cysteine attachment occurs at residues Cys375 and Cys391. A helical membrane pass occupies residues 421–450 (FIWWIRCLVINVVLFILLFFLTTPAIIITT). Residues 451–465 (MDKFNVTKPVEYLNN) lie on the Extracellular side of the membrane. The chain crosses the membrane as a helical span at residues 466–495 (PIITQFFPTLLLWCFSALLPTIVYYSAFFE). Residues 496 to 499 (AHWT) are Cytoplasmic-facing. The chain crosses the membrane as a helical span at residues 500–536 (RSGENRTTMHKCYTFLIFMVLLLPSLGLSSLDVFFRW). The Extracellular segment spans residues 537 to 559 (LFDKKFLAEAAVRFECVFLPDNG). Residues 560–592 (AFFVNYVIASAFIGNAMDLLRIPGLLMYMIRLC) traverse the membrane as a helical segment. The gating helix stretch occupies residues 560 to 592 (AFFVNYVIASAFIGNAMDLLRIPGLLMYMIRLC). Over 593 to 612 (LARSAAERRNVKRHQAYEFQ) the chain is Cytoplasmic. Residues 613 to 631 (FGAAYAWMMCVFTVVMTYS) form a helical membrane-spanning segment. Residues 632–634 (ITC) are Extracellular-facing. The helical transmembrane segment at 635 to 659 (PIIVPFGLMYMLLKHLVDRYNLYYA) threads the bilayer. Residues 660–666 (YLPAKLD) lie on the Cytoplasmic side of the membrane. A helical transmembrane segment spans residues 667–695 (KKIHSGAVNQVVAAPILCLFWLLFFSTMR). Residues 696–700 (TGFLA) are Extracellular-facing. A helical membrane pass occupies residues 701 to 721 (PTSMFTFVVLVITIVICLCHV). 2 S-palmitoyl cysteine lipidation sites follow: Cys719 and Cys722. Topologically, residues 722–816 (CFGHFKYLSA…DSLIENEIRQ (95 aa)) are cytoplasmic.

The protein belongs to the CSC1 (TC 1.A.17) family. In terms of assembly, monomer. Palmitoylation is required for localization to the plasma membrane and stability.

The protein localises to the cell membrane. Its subcellular location is the lysosome membrane. The protein resides in the early endosome membrane. The catalysed reaction is Ca(2+)(in) = Ca(2+)(out). It carries out the reaction Mg(2+)(in) = Mg(2+)(out). The enzyme catalyses K(+)(in) = K(+)(out). It catalyses the reaction Na(+)(in) = Na(+)(out). The catalysed reaction is Cs(+)(in) = Cs(+)(out). In terms of biological role, mechanosensitive cation channel with low conductance and high activation threshold. Osmosensitive cation channel preferentially activated by hypotonic stress. Also acts as a phospholipid scramblase in response to changes in membrane structure: upon changes in membrane curvature and thickness, alters its conformation and translocates phospholipids, thereby controlling plasma membrane lipid distribution. The protein is Mechanosensitive cation channel TMEM63B of Gallus gallus (Chicken).